We begin with the raw amino-acid sequence, 159 residues long: uncharacterized protein (159 aa).

In terms of domain architecture, N-acetyltransferase spans 7–151 (LLINYKTLEE…NPLIWEPAHI (145 aa)).

This is an uncharacterized protein from Bacillus pumilus (strain SAFR-032).